Reading from the N-terminus, the 240-residue chain is Uridylate kinase (240 aa).

12 to 15 (KLSG) serves as a coordination point for ATP. Residues 20–25 (GKQGFG) are involved in allosteric activation by GTP. Glycine 54 provides a ligand contact to UMP. The ATP site is built by glycine 55 and arginine 59. Residues aspartate 74 and 135-142 (TGNPYFST) contribute to the UMP site. Asparagine 163, tyrosine 169, and aspartate 172 together coordinate ATP.

It belongs to the UMP kinase family. Homohexamer.

The protein resides in the cytoplasm. The catalysed reaction is UMP + ATP = UDP + ADP. The protein operates within pyrimidine metabolism; CTP biosynthesis via de novo pathway; UDP from UMP (UMPK route): step 1/1. Its activity is regulated as follows. Allosterically activated by GTP. Inhibited by UTP. Functionally, catalyzes the reversible phosphorylation of UMP to UDP. This Geobacillus kaustophilus (strain HTA426) protein is Uridylate kinase.